The following is a 335-amino-acid chain: NAC domain-containing protein 60 (335 aa).

The 143-residue stretch at 14-156 (TFPGFKFSPT…ALVICRLRRN (143 aa)) folds into the NAC domain. Residues 112-162 (IGTKRTLVFHIGRAPKGGRTEWLMHEYCMIGVSLDALVICRLRRNTEFQGS) mediate DNA binding. A helical transmembrane segment spans residues 315 to 335 (ARWDVVVWLLVMIAVLVFYLV).

Expressed in roots, rosette leaves, cauline leaves, shoot apex, stems and flowers.

The protein localises to the membrane. The protein resides in the nucleus. Transcriptional activator activated by proteolytic cleavage through regulated intramembrane proteolysis (RIP). Transcription factor involved in modulation of abscisic acid (ABA) signaling. Attenuates ABA sensitivity and glucose-induced ABA accumulation. Reduces the expression of ABI4 gene. The protein is NAC domain-containing protein 60 of Arabidopsis thaliana (Mouse-ear cress).